Reading from the N-terminus, the 515-residue chain is Maturase K (515 aa).

The protein belongs to the intron maturase 2 family. MatK subfamily.

Its subcellular location is the plastid. It localises to the chloroplast. Usually encoded in the trnK tRNA gene intron. Probably assists in splicing its own and other chloroplast group II introns. In Pinus halepensis (Aleppo pine), this protein is Maturase K.